Here is a 513-residue protein sequence, read N- to C-terminus: Probable mannosyl-oligosaccharide alpha-1,2-mannosidase 1B (513 aa).

Residues 1-21 (MHLSSLSLSLTALAIVSPSAA) form the signal peptide. Residues asparagine 97, asparagine 117, asparagine 184, asparagine 251, asparagine 322, asparagine 348, and asparagine 368 are each glycosylated (N-linked (GlcNAc...) asparagine). Cysteine 334 and cysteine 363 are disulfide-bonded. The active-site Proton donor is glutamate 377. Residue threonine 503 participates in Ca(2+) binding.

The protein belongs to the glycosyl hydrolase 47 family. In terms of assembly, monomer. It depends on Ca(2+) as a cofactor. Mg(2+) is required as a cofactor.

Its subcellular location is the cytoplasmic vesicle lumen. The catalysed reaction is N(4)-(alpha-D-Man-(1-&gt;2)-alpha-D-Man-(1-&gt;2)-alpha-D-Man-(1-&gt;3)-[alpha-D-Man-(1-&gt;2)-alpha-D-Man-(1-&gt;3)-[alpha-D-Man-(1-&gt;2)-alpha-D-Man-(1-&gt;6)]-alpha-D-Man-(1-&gt;6)]-beta-D-Man-(1-&gt;4)-beta-D-GlcNAc-(1-&gt;4)-beta-D-GlcNAc)-L-asparaginyl-[protein] (N-glucan mannose isomer 9A1,2,3B1,2,3) + 4 H2O = N(4)-(alpha-D-Man-(1-&gt;3)-[alpha-D-Man-(1-&gt;3)-[alpha-D-Man-(1-&gt;6)]-alpha-D-Man-(1-&gt;6)]-beta-D-Man-(1-&gt;4)-beta-D-GlcNAc-(1-&gt;4)-beta-D-GlcNAc)-L-asparaginyl-[protein] (N-glucan mannose isomer 5A1,2) + 4 beta-D-mannose. It catalyses the reaction N(4)-(alpha-D-Man-(1-&gt;2)-alpha-D-Man-(1-&gt;2)-alpha-D-Man-(1-&gt;3)-[alpha-D-Man-(1-&gt;3)-[alpha-D-Man-(1-&gt;2)-alpha-D-Man-(1-&gt;6)]-alpha-D-Man-(1-&gt;6)]-beta-D-Man-(1-&gt;4)-beta-D-GlcNAc-(1-&gt;4)-beta-D-GlcNAc)-L-asparaginyl-[protein] (N-glucan mannose isomer 8A1,2,3B1,3) + 3 H2O = N(4)-(alpha-D-Man-(1-&gt;3)-[alpha-D-Man-(1-&gt;3)-[alpha-D-Man-(1-&gt;6)]-alpha-D-Man-(1-&gt;6)]-beta-D-Man-(1-&gt;4)-beta-D-GlcNAc-(1-&gt;4)-beta-D-GlcNAc)-L-asparaginyl-[protein] (N-glucan mannose isomer 5A1,2) + 3 beta-D-mannose. The protein operates within protein modification; protein glycosylation. In terms of biological role, involved in the maturation of Asn-linked oligosaccharides. Progressively trims alpha-1,2-linked mannose residues from Man(9)GlcNAc(2) to produce Man(5)GlcNAc(2). The protein is Probable mannosyl-oligosaccharide alpha-1,2-mannosidase 1B (mns1B) of Aspergillus niger (strain ATCC MYA-4892 / CBS 513.88 / FGSC A1513).